Here is a 347-residue protein sequence, read N- to C-terminus: UDP-N-acetylenolpyruvoylglucosamine reductase (347 aa).

The 175-residue stretch at 23-197 (LPARAARLLR…LRVRFRLPQA (175 aa)) folds into the FAD-binding PCMH-type domain. Arginine 174 is an active-site residue. Residue serine 247 is the Proton donor of the active site. Glutamate 343 is a catalytic residue.

This sequence belongs to the MurB family. FAD serves as cofactor.

It is found in the cytoplasm. It catalyses the reaction UDP-N-acetyl-alpha-D-muramate + NADP(+) = UDP-N-acetyl-3-O-(1-carboxyvinyl)-alpha-D-glucosamine + NADPH + H(+). Its pathway is cell wall biogenesis; peptidoglycan biosynthesis. Its function is as follows. Cell wall formation. This Azoarcus sp. (strain BH72) protein is UDP-N-acetylenolpyruvoylglucosamine reductase.